A 198-amino-acid chain; its full sequence is Recombination protein RecR (198 aa).

The C4-type zinc finger occupies 57–72; sequence CPVCFNITDAERCDVC. Residues 80–173 enclose the Toprim domain; it reads NLICVVEEPG…VVSRIAYGLP (94 aa).

The protein belongs to the RecR family.

Its function is as follows. May play a role in DNA repair. It seems to be involved in an RecBC-independent recombinational process of DNA repair. It may act with RecF and RecO. This is Recombination protein RecR from Deinococcus deserti (strain DSM 17065 / CIP 109153 / LMG 22923 / VCD115).